Here is a 270-residue protein sequence, read N- to C-terminus: Undecaprenyl-diphosphatase 1 (270 aa).

6 helical membrane-spanning segments follow: residues 79–99 (NLLLGIVIAFIPAAVAGLLFS), 105–125 (VLFNPVCVAIAFIVGGLIILW), 155–175 (LALIPGTSRSGATIIGGLFLG), 182–202 (TEFSFFLGIPTLGAASLYSLI), 215–235 (VFAVGFIASFVFAFLAIRALL), and 242–262 (SFAVFAWYRIAFGLIVLGTWW).

It belongs to the UppP family.

Its subcellular location is the cell inner membrane. It catalyses the reaction di-trans,octa-cis-undecaprenyl diphosphate + H2O = di-trans,octa-cis-undecaprenyl phosphate + phosphate + H(+). Its function is as follows. Catalyzes the dephosphorylation of undecaprenyl diphosphate (UPP). Confers resistance to bacitracin. The sequence is that of Undecaprenyl-diphosphatase 1 from Chromobacterium violaceum (strain ATCC 12472 / DSM 30191 / JCM 1249 / CCUG 213 / NBRC 12614 / NCIMB 9131 / NCTC 9757 / MK).